The primary structure comprises 103 residues: Ig kappa-b5 chain C region (103 aa).

An Ig-like domain is found at Pro-5–Ser-99. A disulfide bridge connects residues Cys-26 and Cys-85.

The chain is Ig kappa-b5 chain C region from Oryctolagus cuniculus (Rabbit).